The sequence spans 76 residues: Protein OPG128 (76 aa).

A disulfide bridge connects residues C17 and C21.

Belongs to the orthopoxvirus OPG128 family. Interacts with sulfhydryl oxidase OPG072; this interaction involves formation of a transient disulfide-bonded intermediate, allowing disulfide bond transfer. Interacts with OPG088; this interaction involves formation of a transient disulfide-bonded intermediate, allowing disulfide bond transfer.

Late protein which probably participates in disulfide bond formation by functioning as a thiol-disulfide transfer protein between membrane-associated OPG072 and OPG08. The complete pathway for formation of disulfide bonds in intracellular virion membrane proteins sequentially involves oxidation of OPG072, OPG128 and OPG08. The chain is Protein OPG128 (OPG128) from Bos taurus (Bovine).